The following is a 152-amino-acid chain: Large ribosomal subunit protein uL15 (152 aa).

The disordered stretch occupies residues 1-66; that stretch reads MRSNPMTLRL…GFEGGQTPMQ (66 aa). The segment covering 28–38 has biased composition (gly residues); it reads RGIGSGLGKTA. A compositionally biased stretch (basic residues) spans 39-52; the sequence is GRGHKGSFARKGGG.

The protein belongs to the universal ribosomal protein uL15 family. As to quaternary structure, part of the 50S ribosomal subunit.

Functionally, binds to the 23S rRNA. This chain is Large ribosomal subunit protein uL15, found in Xanthomonas oryzae pv. oryzae (strain KACC10331 / KXO85).